The chain runs to 98 residues: MPRPKKCRQLSSCAPCSLFKPNGIPAVELTHIQLEADEFEALELGDVKRLSQIEAAALMGISRQTFGYLLANARKKVATAITQGQALRLPTPKDKDLS.

This sequence belongs to the UPF0251 family.

The sequence is that of UPF0251 protein Sbal_3699 from Shewanella baltica (strain OS155 / ATCC BAA-1091).